The sequence spans 412 residues: Serine hydroxymethyltransferase (412 aa).

Residues L117 and 121-123 contribute to the (6S)-5,6,7,8-tetrahydrofolate site; that span reads GHL. K226 carries the N6-(pyridoxal phosphate)lysine modification.

It belongs to the SHMT family. As to quaternary structure, homodimer. Pyridoxal 5'-phosphate serves as cofactor.

It is found in the cytoplasm. It carries out the reaction (6R)-5,10-methylene-5,6,7,8-tetrahydrofolate + glycine + H2O = (6S)-5,6,7,8-tetrahydrofolate + L-serine. It participates in one-carbon metabolism; tetrahydrofolate interconversion. Its pathway is amino-acid biosynthesis; glycine biosynthesis; glycine from L-serine: step 1/1. In terms of biological role, catalyzes the reversible interconversion of serine and glycine with tetrahydrofolate (THF) serving as the one-carbon carrier. This reaction serves as the major source of one-carbon groups required for the biosynthesis of purines, thymidylate, methionine, and other important biomolecules. Also exhibits THF-independent aldolase activity toward beta-hydroxyamino acids, producing glycine and aldehydes, via a retro-aldol mechanism. This Staphylococcus saprophyticus subsp. saprophyticus (strain ATCC 15305 / DSM 20229 / NCIMB 8711 / NCTC 7292 / S-41) protein is Serine hydroxymethyltransferase.